Reading from the N-terminus, the 102-residue chain is MYAIIKTGGKQVKVEAGQEIYVEKLNADVDSTVEFGEVLILGGDDVKVGAPLVEGAKVVATVIKHARAKKITVFKMKAKKNYRRKQGHRQPYTKVRIEKIEA.

The protein belongs to the bacterial ribosomal protein bL21 family. Part of the 50S ribosomal subunit. Contacts protein L20.

Functionally, this protein binds to 23S rRNA in the presence of protein L20. The protein is Large ribosomal subunit protein bL21 of Exiguobacterium sibiricum (strain DSM 17290 / CCUG 55495 / CIP 109462 / JCM 13490 / 255-15).